The chain runs to 876 residues: Alanine--tRNA ligase (876 aa).

Position 74 is an N6-acetyllysine (lysine 74). Zn(2+) contacts are provided by histidine 564, histidine 568, cysteine 666, and histidine 670.

The protein belongs to the class-II aminoacyl-tRNA synthetase family. As to quaternary structure, homotetramer. The cofactor is Zn(2+).

Its subcellular location is the cytoplasm. The enzyme catalyses tRNA(Ala) + L-alanine + ATP = L-alanyl-tRNA(Ala) + AMP + diphosphate. Its function is as follows. Catalyzes the attachment of alanine to tRNA(Ala) in a two-step reaction: alanine is first activated by ATP to form Ala-AMP and then transferred to the acceptor end of tRNA(Ala). Also edits incorrectly charged Ser-tRNA(Ala) and Gly-tRNA(Ala) via its editing domain. In Escherichia coli (strain SMS-3-5 / SECEC), this protein is Alanine--tRNA ligase.